Consider the following 411-residue polypeptide: G1/S-specific cyclin pas1 (411 aa).

2 disordered regions span residues 210-253 (LKNQ…PSVL) and 307-326 (SLSKPVSLPPTPSSPKVGVY). Residues 218 to 252 (PSSSPQTTQDSSPILTMAPSTPVSVGSTPPSTPSV) show a composition bias toward low complexity.

This sequence belongs to the cyclin family.

Essential for the control of the cell cycle at the G1/S (start) transition. Interacts with the pef1 protein kinase. The pef1/pas1 complex activates the res2/cdc10 complex. The sequence is that of G1/S-specific cyclin pas1 (pas1) from Schizosaccharomyces pombe (strain 972 / ATCC 24843) (Fission yeast).